The following is a 194-amino-acid chain: Glycerol-3-phosphate acyltransferase (194 aa).

6 helical membrane passes run 2-22 (AFFCFIVLTYFIGAIPSGVWI), 52-72 (LGVAVLIMDVLKGFIPLYIAS), 80-100 (DLVILGLVAILAHTFSCFISF), 112-132 (VFLFLIPVITLILLAIFILVA), 137-157 (YVSLASITAAFLLPIFTFFTH), and 161-181 (YLFALSVIIAVFVIYRHKTNI).

This sequence belongs to the PlsY family. As to quaternary structure, probably interacts with PlsX.

Its subcellular location is the cell inner membrane. The enzyme catalyses an acyl phosphate + sn-glycerol 3-phosphate = a 1-acyl-sn-glycero-3-phosphate + phosphate. Its pathway is lipid metabolism; phospholipid metabolism. Its function is as follows. Catalyzes the transfer of an acyl group from acyl-phosphate (acyl-PO(4)) to glycerol-3-phosphate (G3P) to form lysophosphatidic acid (LPA). This enzyme utilizes acyl-phosphate as fatty acyl donor, but not acyl-CoA or acyl-ACP. The sequence is that of Glycerol-3-phosphate acyltransferase from Fusobacterium nucleatum subsp. nucleatum (strain ATCC 25586 / DSM 15643 / BCRC 10681 / CIP 101130 / JCM 8532 / KCTC 2640 / LMG 13131 / VPI 4355).